A 274-amino-acid chain; its full sequence is Homeobox-leucine zipper protein HAT9 (274 aa).

Positions Ser64–Ser74 are enriched in low complexity. Residues Ser64 to Glu96 form a disordered region. The segment at residues Ser110–Gln169 is a DNA-binding region (homeobox). The interval Leu177 to Leu198 is leucine-zipper.

The protein belongs to the HD-ZIP homeobox family. Class II subfamily.

The protein resides in the nucleus. Probable transcription factor. The chain is Homeobox-leucine zipper protein HAT9 (HAT9) from Arabidopsis thaliana (Mouse-ear cress).